The following is a 334-amino-acid chain: YbbR-like domain-containing protein BB_0009 (334 aa).

The chain crosses the membrane as a helical span at residues 22 to 38 (AISILIAILMFVAFNFN). 2 consecutive YbbR-like domains span residues 43–128 (ITTE…NVLL) and 138–220 (VKIE…VVNI).

The protein resides in the membrane. In Borreliella burgdorferi (strain ATCC 35210 / DSM 4680 / CIP 102532 / B31) (Borrelia burgdorferi), this protein is YbbR-like domain-containing protein BB_0009.